The following is a 611-amino-acid chain: Protein ral2 (611 aa).

Kelch repeat units lie at residues 43–91 (EAFV…HSGD), 96–149 (KLIF…EVNG), and 175–224 (YLII…VINK). Ser604 carries the post-translational modification Phosphoserine.

Functionally, essential for mating and for recognition of the mating pheromone, and for the determination of cell shape. Implicated in activation of the ras1 protein. The sequence is that of Protein ral2 (ral2) from Schizosaccharomyces pombe (strain 972 / ATCC 24843) (Fission yeast).